Here is a 377-residue protein sequence, read N- to C-terminus: N-acetyldiaminopimelate deacetylase (377 aa).

Asp70 is an active-site residue. The active-site Proton acceptor is Glu129.

Belongs to the peptidase M20A family. N-acetyldiaminopimelate deacetylase subfamily.

The enzyme catalyses N-acetyl-(2S,6S)-2,6-diaminopimelate + H2O = (2S,6S)-2,6-diaminopimelate + acetate. It participates in amino-acid biosynthesis; L-lysine biosynthesis via DAP pathway; LL-2,6-diaminopimelate from (S)-tetrahydrodipicolinate (acetylase route): step 3/3. Its function is as follows. Catalyzes the conversion of N-acetyl-diaminopimelate to diaminopimelate and acetate. The protein is N-acetyldiaminopimelate deacetylase of Streptococcus thermophilus (strain CNRZ 1066).